A 364-amino-acid chain; its full sequence is Peptide chain release factor 2 (364 aa).

N5-methylglutamine is present on Q251.

The protein belongs to the prokaryotic/mitochondrial release factor family. In terms of processing, methylated by PrmC. Methylation increases the termination efficiency of RF2.

It is found in the cytoplasm. In terms of biological role, peptide chain release factor 2 directs the termination of translation in response to the peptide chain termination codons UGA and UAA. The polypeptide is Peptide chain release factor 2 (prfB) (Buchnera aphidicola subsp. Schizaphis graminum (strain Sg)).